The chain runs to 438 residues: Lipoyl synthase, mitochondrial (438 aa).

The transit peptide at 1 to 31 (MAASARGLRTLQSAHSSTTVPRLQLAVSRCY) directs the protein to the mitochondrion. A compositionally biased stretch (low complexity) spans 34-57 (TTSPDPPITNSSNSSNSSNSTPTP). The disordered stretch occupies residues 34 to 58 (TTSPDPPITNSSNSSNSSNSTPTPK). [4Fe-4S] cluster is bound by residues cysteine 148, cysteine 153, cysteine 159, cysteine 179, cysteine 183, cysteine 186, and serine 394. Residues 162–383 (GSSKSAATAT…KERALEMGFL (222 aa)) enclose the Radical SAM core domain.

This sequence belongs to the radical SAM superfamily. Lipoyl synthase family. [4Fe-4S] cluster is required as a cofactor.

It localises to the mitochondrion. It carries out the reaction [[Fe-S] cluster scaffold protein carrying a second [4Fe-4S](2+) cluster] + N(6)-octanoyl-L-lysyl-[protein] + 2 oxidized [2Fe-2S]-[ferredoxin] + 2 S-adenosyl-L-methionine + 4 H(+) = [[Fe-S] cluster scaffold protein] + N(6)-[(R)-dihydrolipoyl]-L-lysyl-[protein] + 4 Fe(3+) + 2 hydrogen sulfide + 2 5'-deoxyadenosine + 2 L-methionine + 2 reduced [2Fe-2S]-[ferredoxin]. The protein operates within protein modification; protein lipoylation via endogenous pathway; protein N(6)-(lipoyl)lysine from octanoyl-[acyl-carrier-protein]: step 2/2. Functionally, catalyzes the radical-mediated insertion of two sulfur atoms into the C-6 and C-8 positions of the octanoyl moiety bound to the lipoyl domains of lipoate-dependent enzymes, thereby converting the octanoylated domains into lipoylated derivatives. This Paracoccidioides brasiliensis (strain Pb18) protein is Lipoyl synthase, mitochondrial.